Here is a 329-residue protein sequence, read N- to C-terminus: Ribosomal RNA small subunit methyltransferase H (329 aa).

S-adenosyl-L-methionine contacts are provided by residues 46–48, Asp-65, Phe-92, Asp-113, and His-120; that span reads GGH. The disordered stretch occupies residues 295–329; the sequence is RGAERPSPAEVAANPRAASARLRAAEKIRDTREAA. Over residues 317–329 the composition is skewed to basic and acidic residues; that stretch reads RAAEKIRDTREAA.

It belongs to the methyltransferase superfamily. RsmH family.

Its subcellular location is the cytoplasm. It carries out the reaction cytidine(1402) in 16S rRNA + S-adenosyl-L-methionine = N(4)-methylcytidine(1402) in 16S rRNA + S-adenosyl-L-homocysteine + H(+). In terms of biological role, specifically methylates the N4 position of cytidine in position 1402 (C1402) of 16S rRNA. This is Ribosomal RNA small subunit methyltransferase H from Acidothermus cellulolyticus (strain ATCC 43068 / DSM 8971 / 11B).